A 456-amino-acid chain; its full sequence is Putrescine--pyruvate aminotransferase (456 aa).

Residue Tyr156 coordinates substrate. Asp262 lines the pyridoxal 5'-phosphate pocket. At Lys291 the chain carries N6-(pyridoxal phosphate)lysine. Gly322 and Arg417 together coordinate substrate.

This sequence belongs to the class-III pyridoxal-phosphate-dependent aminotransferase family. Requires pyridoxal 5'-phosphate as cofactor.

The enzyme catalyses putrescine + pyruvate = 4-aminobutanal + L-alanine. It functions in the pathway amine and polyamine degradation; putrescine degradation; 4-aminobutanal from putrescine (transaminase route). Functionally, involved in the putrescine catabolism. Catalyzes the transfer of the amino group from putrescine to pyruvate to yield 4-aminobutanal and alanine. This chain is Putrescine--pyruvate aminotransferase, found in Pseudomonas aeruginosa (strain ATCC 15692 / DSM 22644 / CIP 104116 / JCM 14847 / LMG 12228 / 1C / PRS 101 / PAO1).